A 271-amino-acid chain; its full sequence is Cobalt import ATP-binding protein CbiO (271 aa).

In terms of domain architecture, ABC transporter spans 2–236 (LATSDLWFRY…TEAMEHAGLT (235 aa)). 34–41 (GANGCGKS) contacts ATP.

Belongs to the ABC transporter superfamily. Cobalt importer (TC 3.A.1.18.1) family. As to quaternary structure, forms an energy-coupling factor (ECF) transporter complex composed of an ATP-binding protein (A component, CbiO), a transmembrane protein (T component, CbiQ) and 2 possible substrate-capture proteins (S components, CbiM and CbiN) of unknown stoichimetry.

Its subcellular location is the cell inner membrane. It participates in cofactor biosynthesis; adenosylcobalamin biosynthesis. Part of the energy-coupling factor (ECF) transporter complex CbiMNOQ involved in cobalt import. Presumably responsible for energy coupling to the transport system. The protein is Cobalt import ATP-binding protein CbiO of Salmonella typhi.